The sequence spans 289 residues: DNA repair protein rad14 (289 aa).

The Zn(2+) site is built by C116, C119, C137, and C140. The segment at 116–140 is a zinc-finger region; sequence CFECDSIELDTKYFDIFHCRVCHTC.

Belongs to the XPA family. Interacts with hrq1.

The protein resides in the nucleus. Involved in nucleotide excision repair (NER). Functional in repair of ultraviolet radiation induced damages and in mitotic mutation avoidance. Binds damaged DNA. Binds specifically to base-base mismatches or small insertion/deletion loops with unpaired nucleotides. Maintains GT repeat stability. Functions as a part of the short-patch excision repair system. The sequence is that of DNA repair protein rad14 from Schizosaccharomyces pombe (strain 972 / ATCC 24843) (Fission yeast).